We begin with the raw amino-acid sequence, 299 residues long: Glutamyl-Q tRNA(Asp) synthetase (299 aa).

Residues 9 to 13 (RFAPS) and Glu-45 each bind L-glutamate. Positions 12 to 22 (PSPTGPLHFGS) match the 'HIGH' region motif. The Zn(2+) site is built by Cys-101, Cys-103, and Cys-118. Residues Tyr-170 and Arg-188 each coordinate L-glutamate. The 'KMSKS' region signature appears at 226-230 (KLSKS). Residue Lys-229 participates in ATP binding. A disordered region spans residues 279–299 (QLLPRQRQRDRATCAYERQRD). Residues 285–299 (RQRDRATCAYERQRD) show a composition bias toward basic and acidic residues.

It belongs to the class-I aminoacyl-tRNA synthetase family. GluQ subfamily. It depends on Zn(2+) as a cofactor.

Catalyzes the tRNA-independent activation of glutamate in presence of ATP and the subsequent transfer of glutamate onto a tRNA(Asp). Glutamate is transferred on the 2-amino-5-(4,5-dihydroxy-2-cyclopenten-1-yl) moiety of the queuosine in the wobble position of the QUC anticodon. The chain is Glutamyl-Q tRNA(Asp) synthetase from Xanthomonas oryzae pv. oryzae (strain KACC10331 / KXO85).